The sequence spans 593 residues: Arginine--tRNA ligase (593 aa).

The 'HIGH' region motif lies at 138–148 (ANPTGPLHVGH).

The protein belongs to the class-I aminoacyl-tRNA synthetase family. In terms of assembly, monomer.

It is found in the cytoplasm. It catalyses the reaction tRNA(Arg) + L-arginine + ATP = L-arginyl-tRNA(Arg) + AMP + diphosphate. The chain is Arginine--tRNA ligase from Burkholderia vietnamiensis (strain G4 / LMG 22486) (Burkholderia cepacia (strain R1808)).